Here is a 357-residue protein sequence, read N- to C-terminus: Sulfate/thiosulfate import ATP-binding protein CysA (357 aa).

Residues isoleucine 3–leucine 237 enclose the ABC transporter domain. An ATP-binding site is contributed by glycine 35–threonine 42.

The protein belongs to the ABC transporter superfamily. Sulfate/tungstate importer (TC 3.A.1.6) family. The complex is composed of two ATP-binding proteins (CysA), two transmembrane proteins (CysT and CysW) and a solute-binding protein (CysP).

The protein localises to the cell membrane. It catalyses the reaction sulfate(out) + ATP + H2O = sulfate(in) + ADP + phosphate + H(+). It carries out the reaction thiosulfate(out) + ATP + H2O = thiosulfate(in) + ADP + phosphate + H(+). Part of the ABC transporter complex CysAWTP involved in sulfate/thiosulfate import. Responsible for energy coupling to the transport system. The protein is Sulfate/thiosulfate import ATP-binding protein CysA of Halalkalibacterium halodurans (strain ATCC BAA-125 / DSM 18197 / FERM 7344 / JCM 9153 / C-125) (Bacillus halodurans).